The following is an 85-amino-acid chain: MKTVFAILFLAFIALTYARSYEDVKEEIKNEVEKEILEDLEEESDELNDKRKEINDAKPWRWVRRIRWKKLIPYIPVVVAAAGKK.

Residues 1–18 (MKTVFAILFLAFIALTYA) form the signal peptide. Positions 19 to 57 (RSYEDVKEEIKNEVEKEILEDLEEESDELNDKRKEINDA) are excised as a propeptide. Ala82 is subject to Alanine amide.

The protein belongs to the arminin family. As to expression, expressed in entodermal epithelium along the body column.

It is found in the secreted. The protein resides in the target cell membrane. In terms of biological role, antimicrobial peptide with a broad-spectrum antimicrobial activity. Keeps its antibacterial activity under a wide range of salt concentrations that mimic physiological conditions of human blood, which is surprising, since Hydra is an obligate freshwater animal with nearly no salt tolerance. Does not affect red blood cells. This chain is Arminin 6494, found in Hydra vulgaris (Hydra).